The sequence spans 749 residues: Myosin-binding protein 2 (749 aa).

Residues 17-37 form a helical membrane-spanning segment; sequence ITLILVYAFLEWSLIFFILLN. Positions 164–184 are disordered; it reads NLNDSQEETEEKKVPQSHEKL. Over residues 173 to 184 the composition is skewed to basic and acidic residues; that stretch reads EEKKVPQSHEKL. In terms of domain architecture, GTD-binding spans 411 to 509; the sequence is LTVDKLKFEL…ELEKELEVYR (99 aa). The stretch at 589-621 forms a coiled coil; that stretch reads ERLSILGRLKFLEEKLTDLNNEEDDEEEAKTFE. The disordered stretch occupies residues 608-640; that stretch reads NNEEDDEEEAKTFESNGSINGNEHIHGKETNGK. Basic and acidic residues predominate over residues 630–639; that stretch reads EHIHGKETNG. Residues 676–710 are a coiled coil; the sequence is DSEKGENVTIEEEVDELYERLEALEADREFLRHCV.

Interacts with myosin XI-K and XI-1. As to expression, expressed in leaf epidermal cells, roots and root hairs.

Its subcellular location is the endomembrane system. Functionally, membrane-anchored myosin receptors that define a distinct, plant-specific transport vesicle compartment. The chain is Myosin-binding protein 2 from Arabidopsis thaliana (Mouse-ear cress).